The following is a 556-amino-acid chain: Urocanate hydratase (556 aa).

Residues G52 to G53, Q130, G176 to G178, E196, R201, N242 to A243, Q263 to H267, Y273 to L274, and Y322 each bind NAD(+). The active site involves C410. Residue G492 coordinates NAD(+).

Belongs to the urocanase family. NAD(+) serves as cofactor.

It localises to the cytoplasm. The catalysed reaction is 4-imidazolone-5-propanoate = trans-urocanate + H2O. It participates in amino-acid degradation; L-histidine degradation into L-glutamate; N-formimidoyl-L-glutamate from L-histidine: step 2/3. Its function is as follows. Catalyzes the conversion of urocanate to 4-imidazolone-5-propionate. The protein is Urocanate hydratase of Shewanella oneidensis (strain ATCC 700550 / JCM 31522 / CIP 106686 / LMG 19005 / NCIMB 14063 / MR-1).